Here is a 327-residue protein sequence, read N- to C-terminus: 2-phosphoglycerate kinase (327 aa).

Positions 1–20 (MSEKSSRKERDEKTEKETAR) are enriched in basic and acidic residues. Residues 1 to 27 (MSEKSSRKERDEKTEKETARQGKHRRI) form a disordered region. Positions 25–111 (RRIRVKSRHY…LWRRIKKREE (87 aa)) constitute an ATP-cone domain.

Belongs to the 2-phosphoglycerate kinase family. The cofactor is a divalent metal cation.

It catalyses the reaction (2R)-2-phosphoglycerate + ATP = (2R)-2,3-bisphosphoglycerate + ADP + H(+). The protein operates within thermoadapter biosynthesis; cyclic 2,3-diphosphoglycerate biosynthesis; cyclic 2,3-diphosphoglycerate from 2-phospho-D-glycerate: step 1/2. Catalyzes the phosphorylation of 2-phosphoglycerate to 2,3-diphosphoglycerate. Involved in the biosynthesis of cyclic 2,3-bisphosphoglycerate, a thermoprotectant. The chain is 2-phosphoglycerate kinase from Methanopyrus kandleri (strain AV19 / DSM 6324 / JCM 9639 / NBRC 100938).